A 91-amino-acid chain; its full sequence is Cell division topological specificity factor (91 aa).

The protein belongs to the MinE family.

In terms of biological role, prevents the cell division inhibition by proteins MinC and MinD at internal division sites while permitting inhibition at polar sites. This ensures cell division at the proper site by restricting the formation of a division septum at the midpoint of the long axis of the cell. The polypeptide is Cell division topological specificity factor (Erwinia tasmaniensis (strain DSM 17950 / CFBP 7177 / CIP 109463 / NCPPB 4357 / Et1/99)).